A 1444-amino-acid chain; its full sequence is ABC transporter G family member 39 (1444 aa).

Positions 1-36 (MDIVRMGSVASGGGSVRRTASSWRGTSGRSDAFGRS) are disordered. Residues 19–29 (TASSWRGTSGR) show a composition bias toward polar residues. The ABC transporter 1 domain occupies 154–426 (LSAMRIVSSG…FEAMGFKCPE (273 aa)). 187–194 (GPPGSGKT) lines the ATP pocket. The ABC transmembrane type-2 1 domain occupies 504 to 717 (ELTKACFSRE…AQNAIAVNEF (214 aa)). The next 6 helical transmembrane spans lie at 522-542 (FVYI…MTVF), 555-575 (GAIF…NGFA), 610-630 (IPIS…VMGF), 642-662 (VLLV…AALG), 667-687 (VADT…GFLI), and 754-774 (IGVG…ILFL). In terms of domain architecture, ABC transporter 2 spans 846-1098 (ITFDNIRYSV…HLINYFEGIQ (253 aa)). 891-898 (GVSGAGKT) is a binding site for ATP. Residues 1171 to 1385 (TQCMACLWKQ…TLYGLVASQY (215 aa)) form the ABC transmembrane type-2 2 domain. Transmembrane regions (helical) follow at residues 1192 to 1212 (ATRI…FLNL), 1220 to 1240 (LDLF…GIQN), 1278 to 1298 (IPHI…LIGF), 1305 to 1325 (FFWY…YGMM), 1335 to 1355 (IAAI…GFLI), 1362 to 1382 (IWWR…GLVA), and 1414 to 1434 (LGYV…VFAF).

This sequence belongs to the ABC transporter superfamily. ABCG family. PDR (TC 3.A.1.205) subfamily.

Its subcellular location is the membrane. In terms of biological role, may be a general defense protein. This chain is ABC transporter G family member 39, found in Oryza sativa subsp. japonica (Rice).